Here is a 278-residue protein sequence, read N- to C-terminus: Orotidine 5'-phosphate decarboxylase (278 aa).

The active-site Proton donor is K95.

Belongs to the OMP decarboxylase family. Type 2 subfamily.

The enzyme catalyses orotidine 5'-phosphate + H(+) = UMP + CO2. The protein operates within pyrimidine metabolism; UMP biosynthesis via de novo pathway; UMP from orotate: step 2/2. The sequence is that of Orotidine 5'-phosphate decarboxylase from Mycobacterium marinum (strain ATCC BAA-535 / M).